Here is a 581-residue protein sequence, read N- to C-terminus: Proline--tRNA ligase (581 aa).

This sequence belongs to the class-II aminoacyl-tRNA synthetase family. ProS type 1 subfamily. Homodimer.

It localises to the cytoplasm. It carries out the reaction tRNA(Pro) + L-proline + ATP = L-prolyl-tRNA(Pro) + AMP + diphosphate. Its function is as follows. Catalyzes the attachment of proline to tRNA(Pro) in a two-step reaction: proline is first activated by ATP to form Pro-AMP and then transferred to the acceptor end of tRNA(Pro). As ProRS can inadvertently accommodate and process non-cognate amino acids such as alanine and cysteine, to avoid such errors it has two additional distinct editing activities against alanine. One activity is designated as 'pretransfer' editing and involves the tRNA(Pro)-independent hydrolysis of activated Ala-AMP. The other activity is designated 'posttransfer' editing and involves deacylation of mischarged Ala-tRNA(Pro). The misacylated Cys-tRNA(Pro) is not edited by ProRS. This chain is Proline--tRNA ligase, found in Methylibium petroleiphilum (strain ATCC BAA-1232 / LMG 22953 / PM1).